Here is a 273-residue protein sequence, read N- to C-terminus: Dermonecrotic toxin LsaSicTox-alphaIB1bi (273 aa).

His-5 is an active-site residue. Positions 25 and 27 each coordinate Mg(2+). Catalysis depends on His-41, which acts as the Nucleophile. 2 disulfides stabilise this stretch: Cys-45–Cys-51 and Cys-47–Cys-190. Asp-85 lines the Mg(2+) pocket.

This sequence belongs to the arthropod phospholipase D family. Class II subfamily. The cofactor is Mg(2+). As to expression, expressed by the venom gland.

The protein resides in the secreted. It carries out the reaction an N-(acyl)-sphingosylphosphocholine = an N-(acyl)-sphingosyl-1,3-cyclic phosphate + choline. It catalyses the reaction an N-(acyl)-sphingosylphosphoethanolamine = an N-(acyl)-sphingosyl-1,3-cyclic phosphate + ethanolamine. The enzyme catalyses a 1-acyl-sn-glycero-3-phosphocholine = a 1-acyl-sn-glycero-2,3-cyclic phosphate + choline. The catalysed reaction is a 1-acyl-sn-glycero-3-phosphoethanolamine = a 1-acyl-sn-glycero-2,3-cyclic phosphate + ethanolamine. Its function is as follows. Dermonecrotic toxins cleave the phosphodiester linkage between the phosphate and headgroup of certain phospholipids (sphingolipid and lysolipid substrates), forming an alcohol (often choline) and a cyclic phosphate. This toxin acts on sphingomyelin (SM). It may also act on ceramide phosphoethanolamine (CPE), lysophosphatidylcholine (LPC) and lysophosphatidylethanolamine (LPE), but not on lysophosphatidylserine (LPS), and lysophosphatidylglycerol (LPG). It acts by transphosphatidylation, releasing exclusively cyclic phosphate products as second products. Induces dermonecrosis, hemolysis, increased vascular permeability, edema, inflammatory response, and platelet aggregation. The polypeptide is Dermonecrotic toxin LsaSicTox-alphaIB1bi (Loxosceles sabina (Tucson recluse spider)).